We begin with the raw amino-acid sequence, 413 residues long: Peptidase T (413 aa).

Histidine 81 is a Zn(2+) binding site. Aspartate 83 is an active-site residue. Aspartate 143 contributes to the Zn(2+) binding site. Glutamate 178 serves as the catalytic Proton acceptor. 3 residues coordinate Zn(2+): glutamate 179, aspartate 201, and histidine 383.

It belongs to the peptidase M20B family. Zn(2+) is required as a cofactor.

The protein localises to the cytoplasm. The enzyme catalyses Release of the N-terminal residue from a tripeptide.. Its function is as follows. Cleaves the N-terminal amino acid of tripeptides. The protein is Peptidase T of Lactococcus lactis subsp. hordniae.